The following is a 127-amino-acid chain: UPF0716 protein YtzA (127 aa).

The next 4 membrane-spanning stretches (helical) occupy residues 3–22, 26–46, 70–90, and 93–115; these read FLFL…FLFL, IGIL…AAAA, AIAD…PGFL, and LAGA…FKWL.

This sequence belongs to the UPF0716 (FxsA) family.

It localises to the cell membrane. This chain is UPF0716 protein YtzA (ytzA), found in Bacillus subtilis (strain 168).